The primary structure comprises 301 residues: MGPTASGKTDLAIALARKLPFEIISVDSAMVYRGLDIGTAKPNEEELQLTSHRLINICDPSFPYSAGQFYKDALSEIKTIEIRNRTPLLVGGTMLYFHILEQGFSDLPTADETVRKKIQEEAAQHGWAKIHERLNAIDPKSAARINPNDAQRIQRAFEVYETTGQPLSSYQSLKRFKALPYQFINLILAPENRSWLHQRIEKRFDQMLKNNFLEEVRQLYNRGDLNSDLPAIRTVGYRQVWKYLSGEYDYETMRHKAIAATRQLAKRQLTWLRRWPDAKWFNSEDKDLISQVVDYLKGIGM.

ATP is bound at residue 2 to 9; the sequence is GPTASGKT. 4–9 provides a ligand contact to substrate; sequence TASGKT. Interaction with substrate tRNA stretches follow at residues 27–30 and 151–155; these read DSAM and QRIQR.

It belongs to the IPP transferase family. In terms of assembly, monomer. Mg(2+) is required as a cofactor.

It carries out the reaction adenosine(37) in tRNA + dimethylallyl diphosphate = N(6)-dimethylallyladenosine(37) in tRNA + diphosphate. Catalyzes the transfer of a dimethylallyl group onto the adenine at position 37 in tRNAs that read codons beginning with uridine, leading to the formation of N6-(dimethylallyl)adenosine (i(6)A). The sequence is that of tRNA dimethylallyltransferase from Coxiella burnetii (strain CbuK_Q154) (Coxiella burnetii (strain Q154)).